The following is a 479-amino-acid chain: Aspartyl/glutamyl-tRNA(Asn/Gln) amidotransferase subunit B (479 aa).

This sequence belongs to the GatB/GatE family. GatB subfamily. Heterotrimer of A, B and C subunits.

It catalyses the reaction L-glutamyl-tRNA(Gln) + L-glutamine + ATP + H2O = L-glutaminyl-tRNA(Gln) + L-glutamate + ADP + phosphate + H(+). The catalysed reaction is L-aspartyl-tRNA(Asn) + L-glutamine + ATP + H2O = L-asparaginyl-tRNA(Asn) + L-glutamate + ADP + phosphate + 2 H(+). Its function is as follows. Allows the formation of correctly charged Asn-tRNA(Asn) or Gln-tRNA(Gln) through the transamidation of misacylated Asp-tRNA(Asn) or Glu-tRNA(Gln) in organisms which lack either or both of asparaginyl-tRNA or glutaminyl-tRNA synthetases. The reaction takes place in the presence of glutamine and ATP through an activated phospho-Asp-tRNA(Asn) or phospho-Glu-tRNA(Gln). The chain is Aspartyl/glutamyl-tRNA(Asn/Gln) amidotransferase subunit B from Geotalea uraniireducens (strain Rf4) (Geobacter uraniireducens).